Here is a 528-residue protein sequence, read N- to C-terminus: Bifunctional dihydrofolate reductase-thymidylate synthase (528 aa).

The interval 1–20 is disordered; the sequence is MASELLANPTNGSGITRPDP. The DHFR domain occupies 23-200; the sequence is TYQVVVAATQ…IRYCFTTYVR (178 aa). Val27 contributes to the substrate binding site. NADP(+) contacts are provided by residues Ala29 and 35–41; that span reads GIGKDGK. Asp49 contacts substrate. Residues 73–75 and 94–97 each bind NADP(+); these read RKT and LTRS. The substrate site is built by Ile136, Tyr142, and Thr157. Residue 137–144 coordinates NADP(+); sequence GGGQIYRE. The interval 202 to 528 is thymidylate synthase; it reads RNSVAELTSQ…HQKIEMKMAV (327 aa). DUMP is bound at residue Arg264. Cys409 is an active-site residue. Residues His410, 428 to 432, Asn440, and 470 to 472 each bind dUMP; these read QRSAD and HVY.

In the N-terminal section; belongs to the dihydrofolate reductase family. This sequence in the C-terminal section; belongs to the thymidylate synthase family.

It carries out the reaction (6S)-5,6,7,8-tetrahydrofolate + NADP(+) = 7,8-dihydrofolate + NADPH + H(+). The catalysed reaction is dUMP + (6R)-5,10-methylene-5,6,7,8-tetrahydrofolate = 7,8-dihydrofolate + dTMP. The protein operates within cofactor biosynthesis; tetrahydrofolate biosynthesis; 5,6,7,8-tetrahydrofolate from 7,8-dihydrofolate: step 1/1. Its function is as follows. Bifunctional enzyme. Involved in de novo dTMP biosynthesis. Key enzyme in folate metabolism. Can play two different roles depending on the source of dihydrofolate: de novo synthesis of tetrahydrofolate or recycling of the dihydrofolate released as one of the end products of the TS catalyzed reaction. Catalyzes an essential reaction for de novo glycine and purine synthesis, DNA precursor synthesis, and for the conversion of dUMP to dTMP. The protein is Bifunctional dihydrofolate reductase-thymidylate synthase of Daucus carota (Wild carrot).